The following is a 527-amino-acid chain: T-complex protein 1 subunit delta (527 aa).

The protein belongs to the TCP-1 chaperonin family. As to quaternary structure, heterooligomeric complex of about 850 to 900 kDa that forms two stacked rings, 12 to 16 nm in diameter.

The protein resides in the cytoplasm. Functionally, molecular chaperone; assists the folding of proteins upon ATP hydrolysis. Known to play a role, in vitro, in the folding of actin and tubulin. In Schizosaccharomyces pombe (strain 972 / ATCC 24843) (Fission yeast), this protein is T-complex protein 1 subunit delta (cct4).